A 604-amino-acid polypeptide reads, in one-letter code: Putative O-acetyltransferase SAV0974 (604 aa).

11 consecutive transmembrane segments (helical) span residues 15–35 (YMPGLDGLRAIAVLGIIIYHL), 43–63 (GFLGVDTFFVISGYLITSLLL), 85–105 (LLPAVIVLLMVVGTATLLLKS), 150–170 (AIEEQFYIFFPVILVTLLLTI), 176–196 (IGFIFWGVSIISLGLMMFIYS), 212–232 (LQTLLLGVILAFLWPPFKLKN), 240–260 (YVIDSIGSLSFIVLILLFFII), 267–287 (IYDGGFYLISILTLFIIASVV), 310–330 (YSLYLWHFAVISFVHSYYVDG), 332–352 (IPVYVYFIDISLTIIFAELSY), and 377–397 (FIRMAIVVTLLIPFMLILVGA). Active-site residues include S459, D581, and H584.

The protein belongs to the acyltransferase 3 family.

The protein localises to the cell membrane. In Staphylococcus aureus (strain Mu50 / ATCC 700699), this protein is Putative O-acetyltransferase SAV0974.